We begin with the raw amino-acid sequence, 363 residues long: MKTKYRIAVLPGDGIGPEVMREAYKILNILKNYFSLPIETREFNVGGAAIDQDGVALPKTTLLGCENSDAILFGSXXXXXXXXXXXXXXXXXXXLLPLRKHFNLFGNLRPAQLYSELIHLSPLRSDIINNGFNILCIRELTGGIYFGKPAGRLKKNNIEYAFDTEIYYNYEINRIAHLAFQLAKTRNYKVCSIDKSNVLNSSILWREIVQKVSKNYPDVHLSHLYIDNATMQIIKNPNQFDILLCSNLFGDIISDECAMITGSIGMLPSASLNEKKFGLYEPAGGSAPDIEGKNIANPIAQILSVSMLVRYSMNLKTIADKIDQSVISVLKKGYRTADISNNSHYLKTNEMGDVIASALISGE.

An NAD(+)-binding site is contributed by 78 to 91; it reads XXXXXXXXXXXXXX. Residues R99, R109, R138, and D227 each coordinate substrate. Mg(2+)-binding residues include D227, D251, and D255. Position 285-297 (285-297) interacts with NAD(+); sequence GSAPDIEGKNIAN.

The protein belongs to the isocitrate and isopropylmalate dehydrogenases family. LeuB type 1 subfamily. As to quaternary structure, homodimer. Mg(2+) is required as a cofactor. Mn(2+) serves as cofactor.

The protein localises to the cytoplasm. The enzyme catalyses (2R,3S)-3-isopropylmalate + NAD(+) = 4-methyl-2-oxopentanoate + CO2 + NADH. It participates in amino-acid biosynthesis; L-leucine biosynthesis; L-leucine from 3-methyl-2-oxobutanoate: step 3/4. Its function is as follows. Catalyzes the oxidation of 3-carboxy-2-hydroxy-4-methylpentanoate (3-isopropylmalate) to 3-carboxy-4-methyl-2-oxopentanoate. The product decarboxylates to 4-methyl-2 oxopentanoate. The sequence is that of 3-isopropylmalate dehydrogenase from Buchnera aphidicola subsp. Uroleucon solidaginis.